Here is a 296-residue protein sequence, read N- to C-terminus: MSNSMPIASPVRTQAIVNRYFMHAKKNLGQNFLVDLPAIKGIVEAADIQPGDQVIEIGPGIGSLTEQLLLAGAKVLAYEVDQDLPEILNNELPQKIDGEELKDRFKLVMKDVLKANFVEDNDGFLDLSKSVKIVANLPYYITTPIIFNLIKSDLDFSSLTLMMQKEVAERLVAKPKTKEYGPLSIAVQSRMNVRLAEEVKSTSFMPRPKVDSAVVVLTPLLEKPDINDYAFFDHVVKMCFAQRRKTLANNLKTLIKDKDEREKLINDLGLDVRVRPEELTLNQFVQLAHLLKDRQA.

Positions 31, 33, 58, 79, 111, and 136 each coordinate S-adenosyl-L-methionine.

Belongs to the class I-like SAM-binding methyltransferase superfamily. rRNA adenine N(6)-methyltransferase family. RsmA subfamily.

It is found in the cytoplasm. The enzyme catalyses adenosine(1518)/adenosine(1519) in 16S rRNA + 4 S-adenosyl-L-methionine = N(6)-dimethyladenosine(1518)/N(6)-dimethyladenosine(1519) in 16S rRNA + 4 S-adenosyl-L-homocysteine + 4 H(+). In terms of biological role, specifically dimethylates two adjacent adenosines (A1518 and A1519) in the loop of a conserved hairpin near the 3'-end of 16S rRNA in the 30S particle. May play a critical role in biogenesis of 30S subunits. This chain is Ribosomal RNA small subunit methyltransferase A, found in Lactobacillus johnsonii (strain CNCM I-12250 / La1 / NCC 533).